We begin with the raw amino-acid sequence, 221 residues long: Sigma non-opioid intracellular receptor 1 (221 aa).

The Lumenal segment spans residues 1 to 4 (MALW). A helical transmembrane segment spans residues 5–27 (RGLRAVLAVAGLAVAVQLLRGWL). Over 28–221 (GSKSYVFNRE…STHLSELGFF (194 aa)) the chain is Cytoplasmic. The tract at residues 96-103 (SLTEYVLL) is important for ligand-binding. The segment at 174–221 (FIPSTLGFALADTIFSTQDFLTLFYTVKVYGKALLLETSTHLSELGFF) is C-terminal hydrophobic region.

This sequence belongs to the ERG2 family. Homotrimer.

Its subcellular location is the nucleus inner membrane. It is found in the nucleus outer membrane. The protein localises to the nucleus envelope. It localises to the cytoplasmic vesicle. The protein resides in the endoplasmic reticulum membrane. Its subcellular location is the membrane. Its function is as follows. May function in lipid transport from the endoplasmic reticulum and be involved in a wide array of cellular functions probably through regulation of the biogenesis of lipid microdomains at the plasma membrane. May regulate calcium efflux at the endoplasmic reticulum. The polypeptide is Sigma non-opioid intracellular receptor 1 (sigmar1) (Xenopus tropicalis (Western clawed frog)).